The primary structure comprises 59 residues: Large ribosomal subunit protein uL30 (59 aa).

It belongs to the universal ribosomal protein uL30 family. Part of the 50S ribosomal subunit.

This Ruminiclostridium cellulolyticum (strain ATCC 35319 / DSM 5812 / JCM 6584 / H10) (Clostridium cellulolyticum) protein is Large ribosomal subunit protein uL30.